A 438-amino-acid polypeptide reads, in one-letter code: Coenzyme A disulfide reductase (438 aa).

8-33 (GAVAGGATCASQIRRLDKESDIIIFE) contributes to the FAD binding site. Substrate is bound by residues threonine 15, glutamine 19, arginine 22, serine 39, and asparagine 42. Catalysis depends on cysteine 43, which acts as the Nucleophile. The Redox-active role is filled by cysteine 43. Lysine 71 is a substrate binding site. Residue 151-166 (VLVVGAGYVSLEVLEN) coordinates NADP(+). 267–277 (TNVPNIYAIGD) lines the FAD pocket. Substrate is bound at residue histidine 299. Tyrosine 419 is an FAD binding site. Lysine 427 contacts substrate.

The protein belongs to the class-III pyridine nucleotide-disulfide oxidoreductase family. In terms of assembly, homodimer. It depends on FAD as a cofactor.

It catalyses the reaction NADP(+) + 2 CoA = CoA-disulfide + NADPH + H(+). Its function is as follows. Catalyzes specifically the NADPH-dependent reduction of coenzyme A disulfide. The chain is Coenzyme A disulfide reductase from Staphylococcus aureus (strain COL).